The sequence spans 408 residues: Tryptophan synthase beta chain (408 aa).

N6-(pyridoxal phosphate)lysine is present on Lys-90.

It belongs to the TrpB family. In terms of assembly, tetramer of two alpha and two beta chains. The cofactor is pyridoxal 5'-phosphate.

The enzyme catalyses (1S,2R)-1-C-(indol-3-yl)glycerol 3-phosphate + L-serine = D-glyceraldehyde 3-phosphate + L-tryptophan + H2O. The protein operates within amino-acid biosynthesis; L-tryptophan biosynthesis; L-tryptophan from chorismate: step 5/5. Its function is as follows. The beta subunit is responsible for the synthesis of L-tryptophan from indole and L-serine. The sequence is that of Tryptophan synthase beta chain from Bacillus licheniformis (strain ATCC 14580 / DSM 13 / JCM 2505 / CCUG 7422 / NBRC 12200 / NCIMB 9375 / NCTC 10341 / NRRL NRS-1264 / Gibson 46).